We begin with the raw amino-acid sequence, 494 residues long: Nuclear distribution protein PAC1 (494 aa).

Residues glutamine 14–arginine 46 enclose the LisH domain. Residues asparagine 90 to leucine 123 adopt a coiled-coil conformation. WD repeat units lie at residues asparagine 153 to alanine 192, serine 196 to glutamine 244, glycine 251 to threonine 292, proline 295 to threonine 334, histidine 347 to histidine 395, glycine 415 to glutamate 454, and histidine 457 to phenylalanine 492.

The protein belongs to the WD repeat LIS1/nudF family. Self-associates. Interacts with NDL1 and dynein.

It localises to the cytoplasm. Its subcellular location is the cytoskeleton. The protein localises to the spindle pole. In terms of biological role, positively regulates the activity of the minus-end directed microtubule motor protein dynein. Plays a central role in positioning the mitotic spindle at the bud neck during cell division. Targets cytoplasmic dynein to microtubule plus ends, thereby promoting dynein-mediated microtubule sliding along the bud cortex and consequently the movement of the mitotic spindle to the bud neck. This Saccharomyces cerevisiae (strain YJM789) (Baker's yeast) protein is Nuclear distribution protein PAC1.